A 430-amino-acid chain; its full sequence is Protein AST2 (430 aa).

Functionally, lipid raft-associated protein involved in the targeting of PMA1 from Golgi to the plasma membrane. May induce clustering of PMA1, which facilitates partition of PMA1 into lipid rafts after leaving the ER its and transport to the cell surface. The polypeptide is Protein AST2 (Saccharomyces cerevisiae (strain ATCC 204508 / S288c) (Baker's yeast)).